Here is a 493-residue protein sequence, read N- to C-terminus: Glycosyltransferase alg8 (493 aa).

A run of 4 helical transmembrane segments spans residues 13–32, 47–69, 380–402, and 422–444; these read GWLF…PTSI, VGIW…LYIV, LTVA…LLWI, and PAYP…YVFF.

It belongs to the glycosyltransferase 2 family.

The protein resides in the cell membrane. The protein operates within glycan biosynthesis; alginate biosynthesis. Functionally, possibly a processive enzyme that polymerizes GDP-mannuronic acid. The protein is Glycosyltransferase alg8 (alg8) of Pseudomonas syringae pv. tomato (strain ATCC BAA-871 / DC3000).